The primary structure comprises 677 residues: mRNA 3'-end-processing protein RNA14 (677 aa).

6 HAT repeats span residues 56–88 (ESYA…GELA), 90–124 (DEFE…YIRR), 138–170 (VIVK…FLEQ), 181–214 (QRID…WEQE), 257–289 (RTAN…WERE), and 298–330 (MLSQ…YISE).

In terms of assembly, component of the CFIA complex, which is composed of RNA14, RNA15, PCF11 and CLP1. Interacts with FIP1, PFS2, YSH1 and probably also with RNA15. Probably interacts with the phosphorylated CTD domain of RPB1/RNA polymerase II.

It localises to the nucleus. Its subcellular location is the cytoplasm. In terms of biological role, component of the cleavage factor IA (CFIA) complex, which is involved in the endonucleolytic cleavage during polyadenylation-dependent pre-mRNA 3'-end formation and cooperates with the cleavage factor NAB4/CFIB and the cleavage and polyadenylation factor (CPF) complex. The sequence is that of mRNA 3'-end-processing protein RNA14 (RNA14) from Saccharomyces cerevisiae (strain ATCC 204508 / S288c) (Baker's yeast).